The primary structure comprises 422 residues: Biofilm regulator 1 (422 aa).

Low complexity-rich tracts occupy residues 1-19 (MSSS…TTSA) and 36-45 (SGGSNNGNGS). 2 disordered regions span residues 1-86 (MSSS…KCPP) and 116-207 (RLSS…PSHP). Residues 46 to 61 (ALKSQISPRLSDTSRI) are compositionally biased toward polar residues. 2 stretches are compositionally biased toward low complexity: residues 69–81 (TSGS…SSTP) and 120–143 (PTLP…LSPV). Over residues 146-159 (VINTPPQQPQSVSA) the composition is skewed to polar residues. The span at 160–194 (STSPNTQYQYYQYQQQSSPIQQQQQQQQATPAATP) shows a compositional bias: low complexity. Polar residues predominate over residues 195 to 205 (TVMQMAQNQPS). A GATA-type zinc finger spans residues 282 to 307 (CHRCGTTETPEWRRGPKGVRTLCNAC).

As to quaternary structure, interacts with HDA1.

The protein localises to the nucleus. Its function is as follows. Transcription factor required for hyphal growth, biofilm formation, and virulence. Promotes formation of both conventional and pheromone-stimulated biofilms. Binds and recruits HDA1 to promoters of hypha-specific genes in a rapamycin-dependent manner. Involved in the switch between two heritable states, the white and opaque states. These two cell types differ in many characteristics, including cell structure, mating competence, and virulence. Each state is heritable for many generations, and switching between states occurs stochastically at low frequency. In Candida albicans (strain SC5314 / ATCC MYA-2876) (Yeast), this protein is Biofilm regulator 1 (BRG1).